Reading from the N-terminus, the 375-residue chain is Peptide-N(4)-(N-acetyl-beta-glucosaminyl)asparagine amidase (375 aa).

Zn(2+) is bound by residues Cys-129, Cys-132, Cys-163, and Cys-166. Residue Cys-189 is the Nucleophile of the active site. Active-site residues include His-219 and Asp-236. Glu-239 provides a ligand contact to substrate. Residues 345–375 (KIEVSRTHNIPTGRQTGDAEWTKSRGEDGNE) are disordered. Residues 364–375 (EWTKSRGEDGNE) show a composition bias toward basic and acidic residues.

Belongs to the transglutaminase-like superfamily. PNGase family. The cofactor is Zn(2+).

Its subcellular location is the cytoplasm. The enzyme catalyses Hydrolysis of an N(4)-(acetyl-beta-D-glucosaminyl)asparagine residue in which the glucosamine residue may be further glycosylated, to yield a (substituted) N-acetyl-beta-D-glucosaminylamine and a peptide containing an aspartate residue.. Its function is as follows. Specifically deglycosylates the denatured form of N-linked glycoproteins in the cytoplasm and assists their proteasome-mediated degradation. Cleaves the beta-aspartyl-glucosamine (GlcNAc) of the glycan and the amide side chain of Asn, converting Asn to Asp. Prefers proteins containing high-mannose over those bearing complex type oligosaccharides. Can recognize misfolded proteins in the endoplasmic reticulum that are exported to the cytosol to be destroyed and deglycosylate them, while it has no activity toward native proteins. Deglycosylation is a prerequisite for subsequent proteasome-mediated degradation of some, but not all, misfolded glycoproteins. The sequence is that of Peptide-N(4)-(N-acetyl-beta-glucosaminyl)asparagine amidase (PNG1) from Debaryomyces hansenii (strain ATCC 36239 / CBS 767 / BCRC 21394 / JCM 1990 / NBRC 0083 / IGC 2968) (Yeast).